Consider the following 198-residue polypeptide: Uracil phosphoribosyltransferase homolog (198 aa).

The protein belongs to the UPRTase family.

The protein localises to the plastid. It localises to the chloroplast. The protein is Uracil phosphoribosyltransferase homolog of Pyropia yezoensis (Susabi-nori).